Reading from the N-terminus, the 119-residue chain is Large ribosomal subunit protein uL18 (119 aa).

Belongs to the universal ribosomal protein uL18 family. As to quaternary structure, part of the 50S ribosomal subunit; part of the 5S rRNA/L5/L18/L25 subcomplex. Contacts the 5S and 23S rRNAs.

Its function is as follows. This is one of the proteins that bind and probably mediate the attachment of the 5S RNA into the large ribosomal subunit, where it forms part of the central protuberance. The chain is Large ribosomal subunit protein uL18 from Lactobacillus delbrueckii subsp. bulgaricus (strain ATCC 11842 / DSM 20081 / BCRC 10696 / JCM 1002 / NBRC 13953 / NCIMB 11778 / NCTC 12712 / WDCM 00102 / Lb 14).